Consider the following 500-residue polypeptide: 2-isopropylmalate synthase (500 aa).

The Pyruvate carboxyltransferase domain occupies 5 to 266 (LFIFDTTLRD…ITNITTNKIY (262 aa)). Mn(2+) contacts are provided by Asp-14, His-202, His-204, and Asn-238. The interval 389–500 (KLEYLQVTSG…VDAINKFIVD (112 aa)) is regulatory domain.

The protein belongs to the alpha-IPM synthase/homocitrate synthase family. LeuA type 1 subfamily. As to quaternary structure, homodimer. Mn(2+) is required as a cofactor.

It localises to the cytoplasm. It catalyses the reaction 3-methyl-2-oxobutanoate + acetyl-CoA + H2O = (2S)-2-isopropylmalate + CoA + H(+). Its pathway is amino-acid biosynthesis; L-leucine biosynthesis; L-leucine from 3-methyl-2-oxobutanoate: step 1/4. Catalyzes the condensation of the acetyl group of acetyl-CoA with 3-methyl-2-oxobutanoate (2-ketoisovalerate) to form 3-carboxy-3-hydroxy-4-methylpentanoate (2-isopropylmalate). This Parabacteroides distasonis (strain ATCC 8503 / DSM 20701 / CIP 104284 / JCM 5825 / NCTC 11152) protein is 2-isopropylmalate synthase.